The primary structure comprises 554 residues: Dihydroxy-acid dehydratase (554 aa).

Asp-78 lines the Mg(2+) pocket. Residue Cys-119 coordinates [2Fe-2S] cluster. Asp-120 and Lys-121 together coordinate Mg(2+). N6-carboxylysine is present on Lys-121. Position 191 (Cys-191) interacts with [2Fe-2S] cluster. Residue Glu-444 coordinates Mg(2+). The active-site Proton acceptor is the Ser-470.

The protein belongs to the IlvD/Edd family. As to quaternary structure, homodimer. [2Fe-2S] cluster is required as a cofactor. The cofactor is Mg(2+).

The catalysed reaction is (2R)-2,3-dihydroxy-3-methylbutanoate = 3-methyl-2-oxobutanoate + H2O. It carries out the reaction (2R,3R)-2,3-dihydroxy-3-methylpentanoate = (S)-3-methyl-2-oxopentanoate + H2O. It participates in amino-acid biosynthesis; L-isoleucine biosynthesis; L-isoleucine from 2-oxobutanoate: step 3/4. Its pathway is amino-acid biosynthesis; L-valine biosynthesis; L-valine from pyruvate: step 3/4. Functions in the biosynthesis of branched-chain amino acids. Catalyzes the dehydration of (2R,3R)-2,3-dihydroxy-3-methylpentanoate (2,3-dihydroxy-3-methylvalerate) into 2-oxo-3-methylpentanoate (2-oxo-3-methylvalerate) and of (2R)-2,3-dihydroxy-3-methylbutanoate (2,3-dihydroxyisovalerate) into 2-oxo-3-methylbutanoate (2-oxoisovalerate), the penultimate precursor to L-isoleucine and L-valine, respectively. In Nitratidesulfovibrio vulgaris (strain DP4) (Desulfovibrio vulgaris), this protein is Dihydroxy-acid dehydratase.